The sequence spans 310 residues: MSLYPASPYLASLLLFILALHGALSLRLCSFNVRSFGESKKENHNAMDIIVKIIKRCDLILLMEIKDSNNNICPMLMEKLNGNSRRSTTYNYVISSRLGRNTYKEQYAFLYKEKLVSVKAKYLYHDYQDGDTDVFSREPFVVWFQAPFTAAKDFVIVPLHTTPETSVKEIDELADVYTDVRRRWKAENFIFMGDFNAGCSYVPKKAWKNIRLRTDPNFVWLIGDQEDTTVKKSTSCAYDRIVLRGQEIVNSVVPRSSGVFDFQKAYELSEEEALDVSDHFPVEFKLQSSRAFTNSRKSVSLKKKKKGSRS.

A signal peptide spans 1–25 (MSLYPASPYLASLLLFILALHGALS). The Bipartite nuclear localization signal signature appears at 40 to 56 (KKENHNAMDIIVKIIKR). Active-site residues include glutamate 105 and histidine 160. A disulfide bridge connects residues cysteine 199 and cysteine 236. Residues 289-310 (SRAFTNSRKSVSLKKKKKGSRS) are not required for free DNA-nuclease activity but required for activity towards liposome-coated DNA. The short motif at 301-307 (LKKKKKG) is the Nuclear localization signal element.

The protein belongs to the DNase I family. As to quaternary structure, monomer. Ca(2+) is required as a cofactor. Mg(2+) serves as cofactor. Seems to be synthesized as an inactive precursor protein and converted into an active mature enzyme by removal of the N-terminal precursor peptide during apoptosis. In terms of processing, poly-ADP-ribosylated by PARP1. ADP-ribosylation negatively regulates enzymatic activity during apoptosis. In terms of tissue distribution, detected at high levels in spleen, lymph nodes, thymus and liver. Observed also in kidney and testis, but not in brain or heart.

The protein localises to the nucleus. The protein resides in the secreted. Inhibited by zinc. Functionally, has DNA hydrolytic activity. Is capable of both single- and double-stranded DNA cleavage, producing DNA fragments with 3'-OH ends. Can cleave chromatin to nucleosomal units and cleaves nucleosomal and liposome-coated DNA. Acts in internucleosomal DNA fragmentation (INDF) during apoptosis and necrosis. The role in apoptosis includes myogenic and neuronal differentiation, and BCR-mediated clonal deletion of self-reactive B cells. Is active on chromatin in apoptotic cell-derived membrane-coated microparticles and thus suppresses anti-DNA autoimmunity. Together with DNASE1, plays a key role in degrading neutrophil extracellular traps (NETs). NETs are mainly composed of DNA fibers and are released by neutrophils to bind pathogens during inflammation. Degradation of intravascular NETs by DNASE1 and DNASE1L3 is required to prevent formation of clots that obstruct blood vessels and cause organ damage following inflammation. This chain is Deoxyribonuclease gamma (Dnase1l3), found in Rattus norvegicus (Rat).